Reading from the N-terminus, the 390-residue chain is Transforming growth factor beta-1 proprotein (390 aa).

The first 29 residues, 1–29 (MPPSGLRLLPLLLPLPWLLVLTPGRPAAG), serve as a signal peptide directing secretion. The segment at 30-74 (LSTCKTIDMELVKRKRIEAIRGQILSKLRLASPPSQGEVPPGPLP) is straightjacket domain. The interval 75 to 271 (EAVLALYNST…ATPLERAQHL (197 aa)) is arm domain. N-linked (GlcNAc...) asparagine glycosylation is found at N82, N136, and N176. The segment at 226–252 (DSKDNVLHVEINGISPKRRGDLGTIHD) is bowtie tail. The Cell attachment site signature appears at 244–246 (RGD). Intrachain disulfides connect C285/C294, C293/C356, C322/C387, and C326/C389.

The protein belongs to the TGF-beta family. As to quaternary structure, homodimer; disulfide-linked. Interacts with the serine proteases, HTRA1 and HTRA3: the interaction with either inhibits TGFB1-mediated signaling and the HTRA protease activity is required for this inhibition. May interact with THSD4; this interaction may lead to sequestration by FBN1 microfibril assembly and attenuation of TGFB signaling. Interacts with CD109, DPT and ASPN. Interacts with EFEMP2. Interacts with TSKU; the interaction contributes to regulation of the hair cycle. Interacts with TGFBR3. Homodimer; disulfide-linked. Interacts with transforming growth factor beta-1 (TGF-beta-1) chain; interaction is non-covalent and maintains TGF-beta-1 in a latent state; each latency-associated peptide (LAP) monomer interacts with TGF-beta-1 in the other monomer. Interacts with LTBP1; leading to regulation of TGF-beta-1 activation. Interacts with LRRC32/GARP; leading to regulation of TGF-beta-1 activation on the surface of activated regulatory T-cells (Tregs). Interacts with LRRC33/NRROS; leading to regulation of TGF-beta-1 activation in macrophages and microglia. Interacts (via cell attachment site) with integrins ITGAV and ITGB6 (ITGAV:ITGB6), leading to release of the active TGF-beta-1. Interacts with NREP; the interaction results in a decrease in TGFB1 autoinduction. Interacts with HSP90AB1; inhibits latent TGFB1 activation. In terms of assembly, homodimer; disulfide-linked. Interacts with TGF-beta receptors (TGFBR1 and TGFBR2), leading to signal transduction. Transforming growth factor beta-1 proprotein: The precursor proprotein is cleaved in the Golgi apparatus by FURIN to form Transforming growth factor beta-1 (TGF-beta-1) and Latency-associated peptide (LAP) chains, which remain non-covalently linked, rendering TGF-beta-1 inactive. Post-translationally, N-glycosylated. Deglycosylation leads to activation of Transforming growth factor beta-1 (TGF-beta-1); mechanisms triggering deglycosylation-driven activation of TGF-beta-1 are however unclear. As to expression, abundant in the bone matrix. Expressed in cardiomyocytes.

Its subcellular location is the secreted. The protein resides in the extracellular space. The protein localises to the extracellular matrix. Transforming growth factor beta-1 proprotein: Precursor of the Latency-associated peptide (LAP) and Transforming growth factor beta-1 (TGF-beta-1) chains, which constitute the regulatory and active subunit of TGF-beta-1, respectively. Its function is as follows. Required to maintain the Transforming growth factor beta-1 (TGF-beta-1) chain in a latent state during storage in extracellular matrix. Associates non-covalently with TGF-beta-1 and regulates its activation via interaction with 'milieu molecules', such as LTBP1, LRRC32/GARP and LRRC33/NRROS, that control activation of TGF-beta-1. Interaction with LRRC33/NRROS regulates activation of TGF-beta-1 in macrophages and microglia. Interaction with LRRC32/GARP controls activation of TGF-beta-1 on the surface of activated regulatory T-cells (Tregs). Interaction with integrins (ITGAV:ITGB6 or ITGAV:ITGB8) results in distortion of the Latency-associated peptide chain and subsequent release of the active TGF-beta-1. Functionally, multifunctional protein that regulates the growth and differentiation of various cell types and is involved in various processes, such as normal development, immune function, microglia function and responses to neurodegeneration. Activation into mature form follows different steps: following cleavage of the proprotein in the Golgi apparatus, Latency-associated peptide (LAP) and Transforming growth factor beta-1 (TGF-beta-1) chains remain non-covalently linked rendering TGF-beta-1 inactive during storage in extracellular matrix. At the same time, LAP chain interacts with 'milieu molecules', such as LTBP1, LRRC32/GARP and LRRC33/NRROS that control activation of TGF-beta-1 and maintain it in a latent state during storage in extracellular milieus. TGF-beta-1 is released from LAP by integrins (ITGAV:ITGB6 or ITGAV:ITGB8): integrin-binding to LAP stabilizes an alternative conformation of the LAP bowtie tail and results in distortion of the LAP chain and subsequent release of the active TGF-beta-1. Once activated following release of LAP, TGF-beta-1 acts by binding to TGF-beta receptors (TGFBR1 and TGFBR2), which transduce signal. While expressed by many cells types, TGF-beta-1 only has a very localized range of action within cell environment thanks to fine regulation of its activation by Latency-associated peptide chain (LAP) and 'milieu molecules'. Plays an important role in bone remodeling: acts as a potent stimulator of osteoblastic bone formation, causing chemotaxis, proliferation and differentiation in committed osteoblasts. Can promote either T-helper 17 cells (Th17) or regulatory T-cells (Treg) lineage differentiation in a concentration-dependent manner. At high concentrations, leads to FOXP3-mediated suppression of RORC and down-regulation of IL-17 expression, favoring Treg cell development. At low concentrations in concert with IL-6 and IL-21, leads to expression of the IL-17 and IL-23 receptors, favoring differentiation to Th17 cells. Stimulates sustained production of collagen through the activation of CREB3L1 by regulated intramembrane proteolysis (RIP). Mediates SMAD2/3 activation by inducing its phosphorylation and subsequent translocation to the nucleus. Positively regulates odontoblastic differentiation in dental papilla cells, via promotion of IPO7-mediated translocation of phosphorylated SMAD2 to the nucleus and subsequent transcription of target genes. Can induce epithelial-to-mesenchymal transition (EMT) and cell migration in various cell types. The sequence is that of Transforming growth factor beta-1 proprotein (Tgfb1) from Rattus norvegicus (Rat).